The primary structure comprises 250 residues: Ino eighty subunit 3 (250 aa).

The segment at 29–70 is disordered; that stretch reads PDFLEKDPHHKKFHNADGLNQQGSSTPSTATDANAASTASTH. A compositionally biased stretch (low complexity) spans 52-70; sequence SSTPSTATDANAASTASTH. Ser-157 and Ser-211 each carry phosphoserine.

As to quaternary structure, component of the chromatin-remodeling INO80 complex, at least composed of ARP4, ARP5, ARP8, RVB1, RVB2, TAF14, NHP10, IES1, IES3, IES4, IES6, ACT1, IES2, IES5 and INO80.

The protein localises to the nucleus. In terms of biological role, probably involved in transcription regulation via its interaction with the INO80 complex, a chromatin-remodeling complex. The chain is Ino eighty subunit 3 (IES3) from Saccharomyces cerevisiae (strain ATCC 204508 / S288c) (Baker's yeast).